A 268-amino-acid polypeptide reads, in one-letter code: Aliphatic sulfonates import ATP-binding protein SsuB 2 (268 aa).

Residues 15 to 236 (LAVRKLQKTF…VRGSHRLAAL (222 aa)) enclose the ABC transporter domain. 47 to 54 (GRSGCGKS) contributes to the ATP binding site.

The protein belongs to the ABC transporter superfamily. Aliphatic sulfonates importer (TC 3.A.1.17.2) family. The complex is composed of two ATP-binding proteins (SsuB), two transmembrane proteins (SsuC) and a solute-binding protein (SsuA).

It is found in the cell inner membrane. It carries out the reaction ATP + H2O + aliphatic sulfonate-[sulfonate-binding protein]Side 1 = ADP + phosphate + aliphatic sulfonateSide 2 + [sulfonate-binding protein]Side 1.. Part of the ABC transporter complex SsuABC involved in aliphatic sulfonates import. Responsible for energy coupling to the transport system. The protein is Aliphatic sulfonates import ATP-binding protein SsuB 2 of Pseudomonas fluorescens (strain ATCC BAA-477 / NRRL B-23932 / Pf-5).